A 235-amino-acid chain; its full sequence is Class A basic helix-loop-helix protein 9 (235 aa).

2 disordered regions span residues 1 to 69 (MLRG…RRMA) and 132 to 235 (GHLE…HPRS). The segment covering 55–67 (RRRARPVRSKARR) has biased composition (basic residues). The 53-residue stretch at 65-117 (ARRMAANVRERKRILDYNEAFNALRRALRHDLGGKRLSKIATLRRAIHRIAAL) folds into the bHLH domain.

In terms of assembly, heterodimer. Efficient DNA binding requires dimerization with another bHLH protein. Interacts with TCF3, TCF4, and TCF12.

It localises to the nucleus. The protein localises to the cytoplasm. Transcription factor, which play a role in limb development. Is an essential player in the regulatory network governing transcription of genes implicated in limb morphogenesis. The polypeptide is Class A basic helix-loop-helix protein 9 (BHLHA9) (Homo sapiens (Human)).